The following is a 587-amino-acid chain: Tyrosine-protein kinase transforming protein Src (587 aa).

Residues 1-58 (MGSSKSKPKDPSQRRRSLEPPDSTHHGGFPASQTPNKTAAPDTHRTPSRSFGTVATEP) are disordered. G2 carries N-myristoyl glycine; by host lipidation. Over residues 7–25 (KPKDPSQRRRSLEPPDSTH) the composition is skewed to basic and acidic residues. The 62-residue stretch at 81 to 142 (GGVTTFVALY…PSNYVAPSDS (62 aa)) folds into the SH3 domain. The SH2 domain maps to 148–245 (WYFGKITRRE…GLCHRLTNVC (98 aa)). Residues 267–520 (LRLEVKLGQG…YLQAFLEDYF (254 aa)) enclose the Protein kinase domain. ATP contacts are provided by residues 273 to 281 (LGQGCFGEV) and K295. Residue D386 is the Proton acceptor of the active site. Y416 bears the Phosphotyrosine; by autocatalysis mark.

This sequence belongs to the protein kinase superfamily. Tyr protein kinase family. SRC subfamily. In terms of processing, the phosphorylated form is termed pp60v-src.

The catalysed reaction is L-tyrosyl-[protein] + ATP = O-phospho-L-tyrosyl-[protein] + ADP + H(+). Its function is as follows. This phosphoprotein, required for both the initiation and the maintenance of neoplastic transformation, is a protein kinase that catalyzes the phosphorylation of tyrosine residues in vitro. This chain is Tyrosine-protein kinase transforming protein Src (V-SRC), found in Galliformes.